Consider the following 588-residue polypeptide: Calicin (588 aa).

The 71-residue stretch at 28-98 (WDMALTVDHH…FYSGKVVISE (71 aa)) folds into the BTB domain. Positions 133 to 235 (CLRYLFLAEL…NAVSNKTLMF (103 aa)) constitute a BACK domain. Ser149 bears the Phosphoserine mark. Kelch repeat units lie at residues 280–327 (SVVI…AAGR), 328–375 (YIYI…TCGG), 377–423 (VYSV…TKGD), 425–475 (NLYI…SFHQ), 476–525 (DNIL…IGDS), and 526–580 (KVFV…LAKL).

Interacts with CYLC1; the interaction may be relevant for proper acrosome attachment to the nuclear envelope.

The protein localises to the cytoplasm. It localises to the cytoskeleton. The protein resides in the perinuclear theca. Its subcellular location is the calyx. Functionally, required for both nuclear and acrosomal shaping during spermiogenesis. This Rattus norvegicus (Rat) protein is Calicin (Ccin).